A 207-amino-acid chain; its full sequence is Holliday junction resolvase RecU (207 aa).

The interval 1-30 (MPIRYPNGQPYSRSPKQGQAKKPLPADTYS) is disordered. Threonine 87, aspartate 89, glutamate 102, and glutamine 121 together coordinate Mg(2+).

Belongs to the RecU family. The cofactor is Mg(2+).

It localises to the cytoplasm. The enzyme catalyses Endonucleolytic cleavage at a junction such as a reciprocal single-stranded crossover between two homologous DNA duplexes (Holliday junction).. Its function is as follows. Endonuclease that resolves Holliday junction intermediates in genetic recombination. Cleaves mobile four-strand junctions by introducing symmetrical nicks in paired strands. Promotes annealing of linear ssDNA with homologous dsDNA. Required for DNA repair, homologous recombination and chromosome segregation. The sequence is that of Holliday junction resolvase RecU from Shouchella clausii (strain KSM-K16) (Alkalihalobacillus clausii).